Here is a 189-residue protein sequence, read N- to C-terminus: MSIKSDKWIRRMAQESGMIEPFEPGQVRQSADGQKIVSYGTSSYGYDIRCAREFKVFTNIYSTVVDPKNFDEKSFVDIESDVCIIPPNSFALARTMEYFRIPRNVLTICLGKSTYARCGIIVNVTPFEPEWEGYVTLEFSNTTPLPAKIYAGEGCAQVLFFESDEVCETSYRDRGGKYQGQTGVTLPKT.

Residues 112 to 117 (KSTYAR), 136 to 138 (TLE), Gln-157, Tyr-171, and Gln-181 each bind dCTP. The active-site Proton donor/acceptor is the Glu-138.

Belongs to the dCTP deaminase family. In terms of assembly, homotrimer.

It catalyses the reaction dCTP + H2O + H(+) = dUTP + NH4(+). The protein operates within pyrimidine metabolism; dUMP biosynthesis; dUMP from dCTP (dUTP route): step 1/2. Catalyzes the deamination of dCTP to dUTP. This Leptothrix cholodnii (strain ATCC 51168 / LMG 8142 / SP-6) (Leptothrix discophora (strain SP-6)) protein is dCTP deaminase.